Here is a 207-residue protein sequence, read N- to C-terminus: Large ribosomal subunit protein bL25 (207 aa).

Belongs to the bacterial ribosomal protein bL25 family. CTC subfamily. Part of the 50S ribosomal subunit; part of the 5S rRNA/L5/L18/L25 subcomplex. Contacts the 5S rRNA. Binds to the 5S rRNA independently of L5 and L18.

In terms of biological role, this is one of the proteins that binds to the 5S RNA in the ribosome where it forms part of the central protuberance. This is Large ribosomal subunit protein bL25 from Dictyoglomus thermophilum (strain ATCC 35947 / DSM 3960 / H-6-12).